We begin with the raw amino-acid sequence, 304 residues long: MNIVVLFGGTSPEREISLKSGENIAATLRARGHQVETLDTAVPNFVEQLMQLKPDCVFPALHGADGEDGKIQGLLSILHIPYVGSDVRASVITMDKYLTKLVALQSGIPTPSFIYVYDPHLVPDYWDVERKLGSPFIVKPCDVGSTIGLSLVRSASEYEVALEEAFRFSDRLLLEEFIDGFEVTVGLFRLGGDFLVLPPIYVVKPDRIFDYDTKYKPGGAKHVYDLPISVEARERLTSYSKRICKIVGIGGVARLDYIVKDETPYLLEINSIPGMTAESLVPDEVRHAGRDFGEFLEDLIKDAL.

The region spanning 100–301 (KLVALQSGIP…FGEFLEDLIK (202 aa)) is the ATP-grasp domain. Residue 129-184 (ERKLGSPFIVKPCDVGSTIGLSLVRSASEYEVALEEAFRFSDRLLLEEFIDGFEVT) participates in ATP binding. Mg(2+) contacts are provided by aspartate 256, glutamate 268, and asparagine 270.

The protein belongs to the D-alanine--D-alanine ligase family. Requires Mg(2+) as cofactor. It depends on Mn(2+) as a cofactor.

It is found in the cytoplasm. It carries out the reaction 2 D-alanine + ATP = D-alanyl-D-alanine + ADP + phosphate + H(+). It functions in the pathway cell wall biogenesis; peptidoglycan biosynthesis. Cell wall formation. This is D-alanine--D-alanine ligase from Coprothermobacter proteolyticus (strain ATCC 35245 / DSM 5265 / OCM 4 / BT).